We begin with the raw amino-acid sequence, 497 residues long: Transmembrane protein 200A (497 aa).

Over Met1–Ser61 the chain is Cytoplasmic. Residues Thr20 to Ser30 are compositionally biased toward polar residues. Residues Thr20 to Pro44 form a disordered region. A helical membrane pass occupies residues Gly62–Gly82. Over Tyr83–Lys127 the chain is Extracellular. Residue Asn100 is glycosylated (N-linked (GlcNAc...) asparagine). A helical membrane pass occupies residues Met128–Leu148. The Cytoplasmic portion of the chain corresponds to His149–Phe497. Positions Ser353–Ser375 are enriched in low complexity. Disordered regions lie at residues Ser353–Arg385 and His400–Arg438. The segment covering Arg427–Arg438 has biased composition (basic and acidic residues).

The protein belongs to the TMEM200 family.

It localises to the membrane. This chain is Transmembrane protein 200A (tmem200a), found in Danio rerio (Zebrafish).